Here is a 317-residue protein sequence, read N- to C-terminus: Nucleoside ABC transporter permease protein NupC (317 aa).

Helical transmembrane passes span 9 to 29 (IIVANMLIYSTPLIFTSIGGV), 35 to 55 (GIVNVGLEGIMTIGAFSSVVF), 62 to 82 (MFGSMTPWLSILFGALIGALF), 98 to 118 (IVSGTVLNLMAPALGVFLLQV), 132 to 151 (GYWNVPLLSNIPVIGKIFFT), 155 to 172 (LPGFLAIVVAILAWYVLF), 203 to 223 (AGVLLSGVLGGVGGAIYAQAI), 225 to 245 (GNFSVSTIAGQGFISLAAMIF), 251 to 271 (IGAMLSSLLFGLFTSLAVVGG), and 286 to 306 (MAPYVFTIIVLALFLGKAIAP).

It belongs to the binding-protein-dependent transport system permease family. The complex is composed of two ATP-binding proteins (NupA), two transmembrane proteins (NupB and NupC) and a solute-binding protein (BmpA).

Its subcellular location is the cell membrane. Its function is as follows. Part of an ABC transporter complex involved in the uptake of all common nucleosides. Responsible for the translocation of the substrate across the membrane. This Lactococcus lactis subsp. cremoris (strain MG1363) protein is Nucleoside ABC transporter permease protein NupC.